A 663-amino-acid polypeptide reads, in one-letter code: Alcohol oxidase 2 (663 aa).

8–38 (DILVLGGGSSGSCIAGRLANLDHSLKVGLIE) contributes to the FAD binding site. The active-site Proton acceptor is histidine 567. A Microbody targeting signal motif is present at residues 661–663 (ARF).

The protein belongs to the GMC oxidoreductase family. As to quaternary structure, homooctamer. FAD is required as a cofactor.

The protein resides in the peroxisome matrix. The catalysed reaction is a primary alcohol + O2 = an aldehyde + H2O2. It participates in energy metabolism; methane degradation. Minor isoform of alcohol oxidase, which catalyzes the oxidation of methanol to formaldehyde and hydrogen peroxide, the first step in the methanol utilization pathway of methylotrophic yeasts. This chain is Alcohol oxidase 2 (AOX2), found in Komagataella phaffii (strain ATCC 76273 / CBS 7435 / CECT 11047 / NRRL Y-11430 / Wegner 21-1) (Yeast).